Reading from the N-terminus, the 429-residue chain is MLGIVKMEGHETTDWSNYYQDTQEAYSSVPVSNMTQGLASMNTYMTMNPMSSSSNMTAAGSFNMSYGNSGLGAGLSPSGMSGMGAGAASAMNGMGSGVPSMGTALSPSNMNAMSAQQASMNSLSYSSMNPGMSPMAYGSSNMNRARDTKTFRRSYPHAKPPYSYISLITMAIQQAPSKMLTLSEIYQWIMDLFPYYRQNQQRWQNSIRHSLSFNDCFVKVARSPDKPGKGSYWTLHPDSGNMFENGCYLRRQKRFKCEKTQGGKGNQDGRKDHSGPSSPLQRVHGKSSQMDSSSSMSNPSSSPQALEHNGSNGEMKPQVAAGPSPLSSHQNHSTHSLAHESHIHLKGDPHYSFNHPFSINNLMSSSEQQHKLDFKAYEQALQQYSSYGGGLPGMPLGSPSMSGRGNIEPSALEPTYYQGVYSRPVLNTS.

The fork-head DNA-binding region spans K159–K253. Residues E258–S274 are compositionally biased toward basic and acidic residues. Residues E258–S341 are disordered. Residues S287–Q304 are compositionally biased toward low complexity. Polar residues predominate over residues P325 to S336.

At neurula stage, expressed in the notochord but not in the neural floor plate. During tailbud stages, expressed in the neural floor plate. At stage 35, expressed in the rhombencephalon, mesencephalon, pharyngeal pouches, foregut and pronephros. At stage 44, expressed in a region of the gut on the right hand side of the embryo. Expressed in the adult lung and liver.

Its subcellular location is the nucleus. In terms of biological role, probable transcription factor. The protein is Forkhead box protein A1-A (foxa1-a) of Xenopus laevis (African clawed frog).